Here is a 380-residue protein sequence, read N- to C-terminus: Epoxyqueuosine reductase (380 aa).

D139 (proton donor) is an active-site residue. Residues 181-213 (IPFEPDDPLLDSCGDCTICVDRCPTSALVGNGQ) enclose the 4Fe-4S ferredoxin-type 1 domain. 8 residues coordinate [4Fe-4S] cluster: C193, C196, C199, C203, C219, C245, C248, and C252. Residues 234–263 (YRYKIGNRLYGCDTCQQVCPKNRGINTEQD) enclose the 4Fe-4S ferredoxin-type 2 domain.

This sequence belongs to the QueG family. As to quaternary structure, monomer. Requires cob(II)alamin as cofactor. [4Fe-4S] cluster serves as cofactor.

It localises to the cytoplasm. The enzyme catalyses epoxyqueuosine(34) in tRNA + AH2 = queuosine(34) in tRNA + A + H2O. It participates in tRNA modification; tRNA-queuosine biosynthesis. In terms of biological role, catalyzes the conversion of epoxyqueuosine (oQ) to queuosine (Q), which is a hypermodified base found in the wobble positions of tRNA(Asp), tRNA(Asn), tRNA(His) and tRNA(Tyr). The protein is Epoxyqueuosine reductase of Staphylococcus aureus (strain NCTC 8325 / PS 47).